Reading from the N-terminus, the 444-residue chain is Dihydroorotate dehydrogenase (quinone), mitochondrial (444 aa).

The chain crosses the membrane as a helical span at residues 34–56 (GGASRYIIGTASVLVGAMAGFYI). FMN contacts are provided by residues 124–128 (AGLDK) and Thr-148. A substrate-binding site is contributed by Lys-128. Position 173–177 (173–177 (NRYGF)) interacts with substrate. Residues Asn-220 and Asn-250 each coordinate FMN. 250–255 (NVSSPN) lines the substrate pocket. Residue Ser-253 is the Nucleophile of the active site. Residues Lys-301 and Ser-329 each coordinate FMN. 330 to 331 (NT) is a substrate binding site. Residues Gly-355, Gly-385, and 406–407 (YT) each bind FMN.

This sequence belongs to the dihydroorotate dehydrogenase family. Type 2 subfamily. Requires FMN as cofactor.

The protein resides in the mitochondrion inner membrane. It carries out the reaction (S)-dihydroorotate + a quinone = orotate + a quinol. Its pathway is pyrimidine metabolism; UMP biosynthesis via de novo pathway; orotate from (S)-dihydroorotate (quinone route): step 1/1. Catalyzes the conversion of dihydroorotate to orotate with quinone as electron acceptor. This chain is Dihydroorotate dehydrogenase (quinone), mitochondrial (URA9), found in Eremothecium gossypii (strain ATCC 10895 / CBS 109.51 / FGSC 9923 / NRRL Y-1056) (Yeast).